We begin with the raw amino-acid sequence, 384 residues long: Branched-chain-amino-acid aminotransferase 1, mitochondrial (384 aa).

Residues 1–18 (MALRRCLPQYSTTSSYLS) constitute a mitochondrion transit peptide. At Lys231 the chain carries N6-(pyridoxal phosphate)lysine.

This sequence belongs to the class-IV pyridoxal-phosphate-dependent aminotransferase family. Pyridoxal 5'-phosphate is required as a cofactor.

Its subcellular location is the mitochondrion. The catalysed reaction is L-leucine + 2-oxoglutarate = 4-methyl-2-oxopentanoate + L-glutamate. The enzyme catalyses L-isoleucine + 2-oxoglutarate = (S)-3-methyl-2-oxopentanoate + L-glutamate. It catalyses the reaction L-valine + 2-oxoglutarate = 3-methyl-2-oxobutanoate + L-glutamate. It participates in amino-acid degradation; L-leucine degradation; 4-methyl-2-oxopentanoate from L-leucine (aminotransferase route): step 1/1. Its pathway is amino-acid degradation; L-valine degradation. Functionally, converts 2-oxo acids to branched-chain amino acids. Acts on leucine, isoleucine and valine. This Arabidopsis thaliana (Mouse-ear cress) protein is Branched-chain-amino-acid aminotransferase 1, mitochondrial (BCAT1).